Reading from the N-terminus, the 97-residue chain is MTDLRHYDVIVSPAITEKSTLLSDNNQVVFNVAKTATKPEIKAAVEALFGVKVTAVNTLLRLGKTKRFKGLVGKQKDVKKAIVTLAEGQSIDVSTGL.

This sequence belongs to the universal ribosomal protein uL23 family. In terms of assembly, part of the 50S ribosomal subunit. Contacts protein L29, and trigger factor when it is bound to the ribosome.

Functionally, one of the early assembly proteins it binds 23S rRNA. One of the proteins that surrounds the polypeptide exit tunnel on the outside of the ribosome. Forms the main docking site for trigger factor binding to the ribosome. This Rhizobium rhizogenes (strain K84 / ATCC BAA-868) (Agrobacterium radiobacter) protein is Large ribosomal subunit protein uL23.